Reading from the N-terminus, the 281-residue chain is Streptomycin biosynthesis protein StrF (281 aa).

Its pathway is antibiotic biosynthesis; streptomycin biosynthesis. May be involved in the formation of N-methyl-L-glucosamine. This is Streptomycin biosynthesis protein StrF (strF) from Streptomyces griseus.